The following is a 212-amino-acid chain: ATP-dependent Clp protease proteolytic subunit (212 aa).

The active-site Nucleophile is the Ser106. His131 is a catalytic residue.

This sequence belongs to the peptidase S14 family. In terms of assembly, fourteen ClpP subunits assemble into 2 heptameric rings which stack back to back to give a disk-like structure with a central cavity, resembling the structure of eukaryotic proteasomes.

It localises to the cytoplasm. It carries out the reaction Hydrolysis of proteins to small peptides in the presence of ATP and magnesium. alpha-casein is the usual test substrate. In the absence of ATP, only oligopeptides shorter than five residues are hydrolyzed (such as succinyl-Leu-Tyr-|-NHMec, and Leu-Tyr-Leu-|-Tyr-Trp, in which cleavage of the -Tyr-|-Leu- and -Tyr-|-Trp bonds also occurs).. Cleaves peptides in various proteins in a process that requires ATP hydrolysis. Has a chymotrypsin-like activity. Plays a major role in the degradation of misfolded proteins. The protein is ATP-dependent Clp protease proteolytic subunit of Rhodopseudomonas palustris (strain ATCC BAA-98 / CGA009).